The sequence spans 635 residues: Capsid protein (635 aa).

The tract at residues 571-608 is disordered; it reads KAPETEKEEERESETSFTSAESSSEGDGSSDDQAERRA. Positions 573-584 are enriched in basic and acidic residues; sequence PETEKEEERESE. Positions 585–597 are enriched in low complexity; sequence TSFTSAESSSEGD.

The protein belongs to the anelloviridae capsid protein family.

Its subcellular location is the virion. In terms of biological role, self-assembles to form an icosahedral capsid with a T=1 symmetry, about 30 nm in diameter, and consisting of 60 capsid proteins. The capsid encapsulates the genomic DNA. Capsid protein is involved in attachment and entry into the host cell. In Torque teno sus virus 1 (isolate Sd-TTV31), this protein is Capsid protein.